A 237-amino-acid polypeptide reads, in one-letter code: Proteasome subunit beta (237 aa).

The interval 1 to 27 is disordered; it reads MSKFPDLPGMKNLDANPYEPELASFDD. A propeptide spans 1-42 (removed in mature form; by autocatalysis); it reads MSKFPDLPGMKNLDANPYEPELASFDDMDADAGDGDAVAKTG. The active-site Nucleophile is T43.

Belongs to the peptidase T1B family. In terms of assembly, the 20S proteasome core is composed of 14 alpha and 14 beta subunits that assemble into four stacked heptameric rings, resulting in a barrel-shaped structure. The two inner rings, each composed of seven catalytic beta subunits, are sandwiched by two outer rings, each composed of seven alpha subunits. The catalytic chamber with the active sites is on the inside of the barrel. Has a gated structure, the ends of the cylinder being occluded by the N-termini of the alpha-subunits. Is capped at one or both ends by the proteasome regulatory ATPase, PAN.

It is found in the cytoplasm. It catalyses the reaction Cleavage of peptide bonds with very broad specificity.. The formation of the proteasomal ATPase PAN-20S proteasome complex, via the docking of the C-termini of PAN into the intersubunit pockets in the alpha-rings, triggers opening of the gate for substrate entry. Interconversion between the open-gate and close-gate conformations leads to a dynamic regulation of the 20S proteasome proteolysis activity. Component of the proteasome core, a large protease complex with broad specificity involved in protein degradation. The polypeptide is Proteasome subunit beta (Halomicrobium mukohataei (strain ATCC 700874 / DSM 12286 / JCM 9738 / NCIMB 13541) (Haloarcula mukohataei)).